Consider the following 86-residue polypeptide: Large ribosomal subunit protein bL31B (86 aa).

It belongs to the bacterial ribosomal protein bL31 family. Type B subfamily. Part of the 50S ribosomal subunit.

This Citrobacter koseri (strain ATCC BAA-895 / CDC 4225-83 / SGSC4696) protein is Large ribosomal subunit protein bL31B.